Here is a 396-residue protein sequence, read N- to C-terminus: Ribosomal RNA large subunit methyltransferase I (396 aa).

Positions 2 to 81 (TVSIYLAKGR…EAIDKDFFVR (80 aa)) constitute a PUA domain.

This sequence belongs to the methyltransferase superfamily. RlmI family.

The protein resides in the cytoplasm. It carries out the reaction cytidine(1962) in 23S rRNA + S-adenosyl-L-methionine = 5-methylcytidine(1962) in 23S rRNA + S-adenosyl-L-homocysteine + H(+). Specifically methylates the cytosine at position 1962 (m5C1962) of 23S rRNA. The protein is Ribosomal RNA large subunit methyltransferase I of Aliivibrio fischeri (strain ATCC 700601 / ES114) (Vibrio fischeri).